Reading from the N-terminus, the 614-residue chain is FAD-dependent monooxygenase terD (614 aa).

Positions 1-23 (MSSKFDVVICGSGTAGLAAATWL) are cleaved as a signal peptide. FAD contacts are provided by residues 6–35 (DVVI…ILES), Gln-44, Val-137, and 239–241 (RVY). N-linked (GlcNAc...) asparagine glycosylation is present at Asn-260. Tyr-282 and Asp-303 together coordinate FAD. Asn-317 is a glycosylation site (N-linked (GlcNAc...) asparagine). Residue Ser-319 participates in FAD binding. N-linked (GlcNAc...) asparagine glycosylation occurs at Asn-602.

It belongs to the PheA/TfdB FAD monooxygenase family. It depends on FAD as a cofactor.

Its pathway is secondary metabolite biosynthesis. Its function is as follows. FAD-dependent monooxygenase; part of the gene cluster that mediates the biosynthesis of terrein, a fungal metabolite with ecological, antimicrobial, antiproliferative, and antioxidative activities. The first step in the pathway is performed by the polyketide synthase terA that produces 4-hydroxy-6-methylpyranon (4-HMP), orsellinic acid (OA), and 2,3-dehydro-6-hydroxymellein (2,3-dehydro-6-HM) by condensing acetyl-CoA with two, three, or four malonyl-CoA units, respectively. 4-HMP and OA are not pathway intermediates, but are rather shunt or side products. 2,3-dehydro-6-HM is further converted to 6-hydroxymellein (6-HM) by the 6-hydroxymellein synthase terB. The monooxygenases terC and terD, the multicopper oxidase terE and the Kelch-like protein terF are then involved in the transformation of 6-HM to terrein. Even if they are co-regulated with the other terrein cluster genes, terH and terI seem to be dispensable for terrein production; whereas one or both of the 2 transporters terG and terJ are probably required for efficient secretion of metabolites. The polypeptide is FAD-dependent monooxygenase terD (Aspergillus terreus (strain NIH 2624 / FGSC A1156)).